We begin with the raw amino-acid sequence, 184 residues long: ATP synthase subunit b, chloroplastic (184 aa).

The chain crosses the membrane as a helical span at residues 29–49; sequence INLINLILVLGILFYYGKGVL.

This sequence belongs to the ATPase B chain family. As to quaternary structure, F-type ATPases have 2 components, F(1) - the catalytic core - and F(0) - the membrane proton channel. F(1) has five subunits: alpha(3), beta(3), gamma(1), delta(1), epsilon(1). F(0) has four main subunits: a(1), b(1), b'(1) and c(10-14). The alpha and beta chains form an alternating ring which encloses part of the gamma chain. F(1) is attached to F(0) by a central stalk formed by the gamma and epsilon chains, while a peripheral stalk is formed by the delta, b and b' chains.

The protein localises to the plastid. It localises to the chloroplast thylakoid membrane. Functionally, f(1)F(0) ATP synthase produces ATP from ADP in the presence of a proton or sodium gradient. F-type ATPases consist of two structural domains, F(1) containing the extramembraneous catalytic core and F(0) containing the membrane proton channel, linked together by a central stalk and a peripheral stalk. During catalysis, ATP synthesis in the catalytic domain of F(1) is coupled via a rotary mechanism of the central stalk subunits to proton translocation. In terms of biological role, component of the F(0) channel, it forms part of the peripheral stalk, linking F(1) to F(0). The protein is ATP synthase subunit b, chloroplastic of Adiantum capillus-veneris (Maidenhair fern).